The primary structure comprises 506 residues: Bifunctional purine biosynthesis protein PurH (506 aa).

The region spanning 1–142 (MRAIISVYRK…KNFFRVVILV (142 aa)) is the MGS-like domain.

Belongs to the PurH family.

It carries out the reaction (6R)-10-formyltetrahydrofolate + 5-amino-1-(5-phospho-beta-D-ribosyl)imidazole-4-carboxamide = 5-formamido-1-(5-phospho-D-ribosyl)imidazole-4-carboxamide + (6S)-5,6,7,8-tetrahydrofolate. The catalysed reaction is IMP + H2O = 5-formamido-1-(5-phospho-D-ribosyl)imidazole-4-carboxamide. It functions in the pathway purine metabolism; IMP biosynthesis via de novo pathway; 5-formamido-1-(5-phospho-D-ribosyl)imidazole-4-carboxamide from 5-amino-1-(5-phospho-D-ribosyl)imidazole-4-carboxamide (10-formyl THF route): step 1/1. Its pathway is purine metabolism; IMP biosynthesis via de novo pathway; IMP from 5-formamido-1-(5-phospho-D-ribosyl)imidazole-4-carboxamide: step 1/1. This Aquifex aeolicus (strain VF5) protein is Bifunctional purine biosynthesis protein PurH.